The primary structure comprises 94 residues: Small ribosomal subunit protein bS6 (94 aa).

It belongs to the bacterial ribosomal protein bS6 family.

In terms of biological role, binds together with bS18 to 16S ribosomal RNA. In Akkermansia muciniphila (strain ATCC BAA-835 / DSM 22959 / JCM 33894 / BCRC 81048 / CCUG 64013 / CIP 107961 / Muc), this protein is Small ribosomal subunit protein bS6.